The sequence spans 207 residues: Sodium/potassium-transporting ATPase subunit beta-1-interacting protein 1 (207 aa).

3 helical membrane passes run 2–22, 35–55, and 62–82; these read GRCSGRCTLVGICCLQLAAAL, APILANFLHIMVVILGILGTL, and LILYSIWLALWVAWNAFIICF. A glycan (N-linked (GlcNAc...) asparagine) is linked at Asn100. Residues 147 to 167 traverse the membrane as a helical segment; the sequence is ALSSALQIFLALFGFVYACYV.

It belongs to the NKAIN family. In terms of assembly, interacts with atp1b1 C-terminus.

The protein resides in the cell membrane. The sequence is that of Sodium/potassium-transporting ATPase subunit beta-1-interacting protein 1 (nkain1) from Xenopus laevis (African clawed frog).